The following is a 436-amino-acid chain: GTPase Der (436 aa).

EngA-type G domains lie at 4–167 and 176–351; these read PVIA…PKIE and IRFS…ESHS. GTP-binding positions include 10–17, 57–61, 119–122, 182–189, 229–233, and 294–297; these read GRPNVGKS, DTGGI, NKVD, DTAGM, and NKWD. Residues 352 to 436 form the KH-like domain; that stretch reads IRVQTNVLND…PIHIIARARD (85 aa).

The protein belongs to the TRAFAC class TrmE-Era-EngA-EngB-Septin-like GTPase superfamily. EngA (Der) GTPase family. As to quaternary structure, associates with the 50S ribosomal subunit.

Functionally, GTPase that plays an essential role in the late steps of ribosome biogenesis. This Bacillus mycoides (strain KBAB4) (Bacillus weihenstephanensis) protein is GTPase Der.